Reading from the N-terminus, the 222-residue chain is ER membrane protein complex subunit 7 homolog (222 aa).

Residues 1-16 (MKSILLLFSLIVLGSA) form the signal peptide. Residues 17 to 145 (TEEVSRTEQT…RKREEWRITD (129 aa)) are Extracellular-facing. A helical membrane pass occupies residues 146 to 166 (MLFSPMVLMLVVPLVVMLILP). At 167-222 (KMTANDPELKKEMENMQMPKVDMPDVGEMMANFFGGSAPAKKKAVTGGSGSGQRRK) the chain is on the cytoplasmic side.

The protein belongs to the EMC7 family.

Its subcellular location is the membrane. The chain is ER membrane protein complex subunit 7 homolog from Caenorhabditis elegans.